Reading from the N-terminus, the 766-residue chain is Protein transport protein Sec23B (766 aa).

Alanine 2 carries the N-acetylalanine modification. Zn(2+) contacts are provided by cysteine 61, cysteine 66, cysteine 85, and cysteine 88. Residue lysine 564 is modified to N6-acetyllysine. Residues 633 to 719 form a Gelsolin-like repeat; the sequence is PEPVLLDSSS…EHGGSQARFL (87 aa).

The protein belongs to the SEC23/SEC24 family. SEC23 subfamily. COPII is composed of at least five proteins: the Sec23/24 complex, the Sec13/31 complex and Sar1. Interacts with SAR1A.

The protein resides in the cytoplasmic vesicle. Its subcellular location is the COPII-coated vesicle membrane. It localises to the endoplasmic reticulum membrane. It is found in the cytoplasm. The protein localises to the cytosol. Its function is as follows. Component of the coat protein complex II (COPII) which promotes the formation of transport vesicles from the endoplasmic reticulum (ER). The coat has two main functions, the physical deformation of the endoplasmic reticulum membrane into vesicles and the selection of cargo molecules for their transport to the Golgi complex. This is Protein transport protein Sec23B from Pongo abelii (Sumatran orangutan).